We begin with the raw amino-acid sequence, 1001 residues long: Serine/threonine-protein kinase TAO1 (1001 aa).

S9 is subject to Phosphoserine. Residues 28–281 (FTDLREIGHG…SEELLKHMFV (254 aa)) enclose the Protein kinase domain. ATP contacts are provided by residues 34 to 42 (IGHGSFGAV) and K57. D151 functions as the Proton acceptor in the catalytic mechanism. Disordered regions lie at residues 324–380 (PAVE…DKSE) and 404–431 (ENYQ…HKSH). Low complexity predominate over residues 350–370 (SNQSIPSMSISASSQSSSVNS). S421 and S445 each carry phosphoserine. Residues 458–651 (SELREQMSGY…QTQKDLEHAM (194 aa)) adopt a coiled-coil conformation. Residues 567–587 (KEELNENQSTPKKEKQEWLSK) are disordered. Positions 577–587 (PKKEKQEWLSK) are enriched in basic and acidic residues. T669 bears the Phosphothreonine mark. A coiled-coil region spans residues 754–877 (KAVLKRLKEE…LERQAREIEA (124 aa)). The segment at 905-1001 (PGASSWSHNP…ISNGSHMSYT (97 aa)) is disordered. Polar residues predominate over residues 906–915 (GASSWSHNPT). At S965 the chain carries Phosphoserine. Residues 975–1001 (GGRTEQGMSRSTSVTSQISNGSHMSYT) are compositionally biased toward polar residues.

The protein belongs to the protein kinase superfamily. STE Ser/Thr protein kinase family. STE20 subfamily. In terms of assembly, self-associates. Interacts with MAP2K3. Interacts with SPRED1. Interacts with TESK1; the interaction inhibits TAOK1 kinase activity. Interacts with MAP3K7. In terms of processing, proteolytically processed by caspase-3 (CASP3). Autophosphorylated. Phosphorylated by ATM in response to DNA damage. Phosphorylated by LRRK2.

It localises to the cytoplasm. It catalyses the reaction L-seryl-[protein] + ATP = O-phospho-L-seryl-[protein] + ADP + H(+). The catalysed reaction is L-threonyl-[protein] + ATP = O-phospho-L-threonyl-[protein] + ADP + H(+). Its activity is regulated as follows. Serine/threonine-protein kinase activity is inhibited by SPRED1. In terms of biological role, serine/threonine-protein kinase involved in various processes such as p38/MAPK14 stress-activated MAPK cascade, DNA damage response and regulation of cytoskeleton stability. Phosphorylates MAP2K3, MAP2K6 and MARK2. Acts as an activator of the p38/MAPK14 stress-activated MAPK cascade by mediating phosphorylation and subsequent activation of the upstream MAP2K3 and MAP2K6 kinases. Involved in G-protein coupled receptor signaling to p38/MAPK14. In response to DNA damage, involved in the G2/M transition DNA damage checkpoint by activating the p38/MAPK14 stress-activated MAPK cascade, probably by mediating phosphorylation of MAP2K3 and MAP2K6. Acts as a regulator of cytoskeleton stability by phosphorylating 'Thr-208' of MARK2, leading to activate MARK2 kinase activity and subsequent phosphorylation and detachment of MAPT/TAU from microtubules. Also acts as a regulator of apoptosis: regulates apoptotic morphological changes, including cell contraction, membrane blebbing and apoptotic bodies formation via activation of the MAPK8/JNK cascade. During fetal development, it plays an essential role in the regulation of neuronal differentiation and migration to the cortical plate. The polypeptide is Serine/threonine-protein kinase TAO1 (Taok1) (Rattus norvegicus (Rat)).